The sequence spans 144 residues: Large ribosomal subunit protein uL15 (144 aa).

The segment covering 1–14 has biased composition (basic residues); sequence MVVRREKKSRKMRG. Residues 1–35 are disordered; sequence MVVRREKKSRKMRGSRTMGWGIRGQHRDRGSQGGR.

This sequence belongs to the universal ribosomal protein uL15 family. In terms of assembly, part of the 50S ribosomal subunit.

In terms of biological role, binds to the 23S rRNA. The protein is Large ribosomal subunit protein uL15 of Saccharolobus solfataricus (strain ATCC 35092 / DSM 1617 / JCM 11322 / P2) (Sulfolobus solfataricus).